The chain runs to 166 residues: Replication restart protein DnaT (166 aa).

It belongs to the DnaT family. In terms of assembly, homooligomerizes. Interacts with PriB. Component of the replication restart primosome. Primosome assembly occurs via a 'hand-off' mechanism. PriA binds to replication forks, subsequently PriB then DnaT bind; DnaT then displaces ssDNA to generate the helicase loading substrate.

In terms of biological role, involved in the restart of stalled replication forks, which reloads the replicative helicase on sites other than the origin of replication. Can function in multiple replication restart pathways. Displaces ssDNA from a PriB-ssDNA complex. Probably forms a spiral filament on ssDNA. The protein is Replication restart protein DnaT of Buchnera aphidicola subsp. Schizaphis graminum (strain Sg).